Reading from the N-terminus, the 387-residue chain is Deoxyguanosinetriphosphate triphosphohydrolase-like protein (387 aa).

Residues 1 to 26 form a disordered region; the sequence is MTAPYASDPQRARGRRVKEEESTFRS. Residues 17–26 show a composition bias toward basic and acidic residues; sequence VKEEESTFRS. The 137-residue stretch at 62 to 198 folds into the HD domain; it reads RLTHSIEVAQ…AAIADDVAYN (137 aa).

This sequence belongs to the dGTPase family. Type 2 subfamily.

This is Deoxyguanosinetriphosphate triphosphohydrolase-like protein from Roseobacter denitrificans (strain ATCC 33942 / OCh 114) (Erythrobacter sp. (strain OCh 114)).